The chain runs to 371 residues: MSVESAENNIRGVPTHGGRYLQYNIYGNLFEVSRKYVPPIRSVGRGAYGIVCAAVNAETREEVAIKKIGNAFDNRIDAKRTLREIKLLRHMDHENVMSIKDIIRPPQKENFNHVYIVSELMDTDLHQIIRSNQPMTDDHCRYFVYQLLRGLKYVHSANVLHRDLKPSNLLLNANCDLKIGDFGLARTTSETDFMTEYVVTRWYRAPELLLNCSDYTAAIDIWSVGCILGEIVTRQPLFPGRDYVHQLRLVTELIGSPDDASLGFLRSENARRYVRQLPQYPKQNFSARFPNMSPGAVDLLEKMLIFDPSKRIKVDEALCHPYMAPLHDINEEPVCARPFSFDFEEPMFTEEDIKELIWKESVRFNPDPPIN.

The region spanning 37-323 (VPPIRSVGRG…VDEALCHPYM (287 aa)) is the Protein kinase domain. Residues 43–51 (VGRGAYGIV) and Lys66 each bind ATP. The active-site Proton acceptor is the Asp163. Thr195 carries the phosphothreonine modification. The TXY signature appears at 195 to 197 (TEY). Tyr197 is subject to Phosphotyrosine.

The protein belongs to the protein kinase superfamily. CMGC Ser/Thr protein kinase family. MAP kinase subfamily. It depends on Mg(2+) as a cofactor. In terms of processing, dually phosphorylated on Thr-195 and Tyr-197, which activates the enzyme. Autophosphorylated.

It catalyses the reaction L-seryl-[protein] + ATP = O-phospho-L-seryl-[protein] + ADP + H(+). The enzyme catalyses L-threonyl-[protein] + ATP = O-phospho-L-threonyl-[protein] + ADP + H(+). Its activity is regulated as follows. Activated by tyrosine and threonine phosphorylation. This chain is Mitogen-activated protein kinase homolog MMK2 (MMK2), found in Medicago sativa (Alfalfa).